A 573-amino-acid chain; its full sequence is MGHNSDKLYVTHSEHAAGSHTASSFGKRQETGKSEFQRLPFDCCALSLQPFKNPVAVISETKAGEAPRADVFDLLNIVPYIRKFKSNPVTGKPLETSQLIKLNFSRNAEGNLHDPITYKVFSPHIHIVFLKNTGNVFDMASLQLLAIKPKTWRDLVNDEPFKRKDIITIQDPENLAARDLREYDYVKKDLKVSEDELAGDPLRGINVDAAGGASKVLKMIAEKNKSGQSPAPTPSKIDDGKGQEKKEGVVAKRKVEQMAYNASNYSSGRAAASLTSTSLMPETKSERAMFDEEEYMFEELSRPTKDKERQKSKAYATITTNFGPLNVELHGDRAPKTVYNFVQLAKAGKYDNVVFHRLIPGFMVQGGDPTGTGRGGESYWGEPFRDEHGEKGAYKHDSRGVLSMANSGPRTNGSQFFFTFRPTPHLDGKHTVFGKLVGGEETLDKIERVNVRPGGDRPVRDIVIQGVTVLQDPFEAYQARLQARLARQDQSDAALKRRAEAQKEREKDRTTWLGTKLGEKGAVGKRRMEEDVGVGKYLKVGGEAGQRTTLDVVDYGVEKKKKKAGGFGDFSGW.

The region spanning 37–119 (QRLPFDCCAL…GNLHDPITYK (83 aa)) is the U-box domain. Positions 223–247 (KNKSGQSPAPTPSKIDDGKGQEKKE) are disordered. Over residues 236-247 (KIDDGKGQEKKE) the composition is skewed to basic and acidic residues. The PPIase cyclophilin-type domain maps to 312–469 (SKAYATITTN…RDIVIQGVTV (158 aa)). Over residues 489 to 510 (DQSDAALKRRAEAQKEREKDRT) the composition is skewed to basic and acidic residues. A disordered region spans residues 489–515 (DQSDAALKRRAEAQKEREKDRTTWLGT).

Belongs to the cyclophilin-type PPIase family. PPIL2 subfamily.

Its subcellular location is the nucleus. The enzyme catalyses [protein]-peptidylproline (omega=180) = [protein]-peptidylproline (omega=0). It catalyses the reaction S-ubiquitinyl-[E2 ubiquitin-conjugating enzyme]-L-cysteine + [acceptor protein]-L-lysine = [E2 ubiquitin-conjugating enzyme]-L-cysteine + N(6)-ubiquitinyl-[acceptor protein]-L-lysine.. It participates in protein modification; protein ubiquitination. Functionally, may catalyze the cis-trans isomerization of proline imidic peptide bonds in oligopeptides thereby assisting the folding of proteins. May also function as a chaperone, playing a role in intracellular transport of proteins. May also have a protein ubiquitin ligase activity acting as an E3 ubiquitin protein ligase or as a ubiquitin-ubiquitin ligase promoting elongation of ubiquitin chains on proteins. The protein is Peptidyl-prolyl cis-trans isomerase-like 2 (CYP8) of Cryptococcus neoformans var. neoformans serotype D (strain B-3501A) (Filobasidiella neoformans).